Reading from the N-terminus, the 207-residue chain is dTDP-4-dehydrorhamnose 3-epimerase (207 aa).

Residues Arg-23, Asp-28, 47–49 (QAN), and Arg-59 each bind substrate. The active-site Proton acceptor is the His-62. Lys-72 and His-119 together coordinate substrate. Tyr-132 (proton donor) is an active-site residue. Substrate is bound by residues Glu-143 and Arg-167.

It belongs to the dTDP-4-dehydrorhamnose 3,5-epimerase family.

It functions in the pathway antibiotic biosynthesis; novobiocin biosynthesis. Its function is as follows. dTDP-6-deoxy-D-xylo-4-hexulose 3-epimerase that acts together with NovU to catalyze the formation of dTDP-4-keto-6-deoxy-5-C-methyl-L-lyxo-hexose from dTDP-4-keto-6-deoxy-D-glucose in the novobiocin biosynthesis pathway, an aminocoumarin family antibiotic that targets bacterial DNA gyrases. The chain is dTDP-4-dehydrorhamnose 3-epimerase from Streptomyces niveus (Streptomyces spheroides).